A 310-amino-acid polypeptide reads, in one-letter code: 4-hydroxyproline 2-epimerase (310 aa).

Cysteine 88 functions as the Proton acceptor in the catalytic mechanism. Substrate-binding positions include 89 to 90 (GH), histidine 208, and aspartate 232. Cysteine 236 acts as the Proton donor in catalysis. 237–238 (GT) serves as a coordination point for substrate.

The protein belongs to the proline racemase family.

The catalysed reaction is trans-4-hydroxy-L-proline = cis-4-hydroxy-D-proline. In terms of biological role, catalyzes the epimerization of trans-4-hydroxy-L-proline (t4LHyp) to cis-4-hydroxy-D-proline (c4DHyp). Is likely involved in a degradation pathway that converts t4LHyp to alpha-ketoglutarate. Displays no proline racemase activity. In Acinetobacter baumannii (strain ATCC 17978 / DSM 105126 / CIP 53.77 / LMG 1025 / NCDC KC755 / 5377), this protein is 4-hydroxyproline 2-epimerase.